We begin with the raw amino-acid sequence, 476 residues long: Serine/threonine-protein kinase sax-1 (476 aa).

Positions 87-381 (FESLKVIGRG…LDEIKQCPFV (295 aa)) constitute a Protein kinase domain. Residues 93–101 (IGRGAFGEV) and lysine 116 each bind ATP. Aspartate 210 (proton acceptor) is an active-site residue. Residues 382–452 (KRIDWNHIRE…KRFDGLTQKM (71 aa)) enclose the AGC-kinase C-terminal domain.

It belongs to the protein kinase superfamily. AGC Ser/Thr protein kinase family. The cofactor is Mg(2+). Widely expressed in embryonic and larval neurons that contribute axons to the nerve ring and in hypodermal cells, including lateral seam cells. Also displays a punctate localization in muscle.

The protein resides in the cytoplasm. It is found in the nucleus. The enzyme catalyses L-seryl-[protein] + ATP = O-phospho-L-seryl-[protein] + ADP + H(+). It carries out the reaction L-threonyl-[protein] + ATP = O-phospho-L-threonyl-[protein] + ADP + H(+). Acts with sax-2 to restrict the growth of both primary and secondary neurites. Regulates mechanosensory tiling by controlling the termination point of sensory dendrites. The protein is Serine/threonine-protein kinase sax-1 of Caenorhabditis elegans.